A 272-amino-acid polypeptide reads, in one-letter code: Indole-3-glycerol phosphate synthase (272 aa).

Belongs to the TrpC family.

It catalyses the reaction 1-(2-carboxyphenylamino)-1-deoxy-D-ribulose 5-phosphate + H(+) = (1S,2R)-1-C-(indol-3-yl)glycerol 3-phosphate + CO2 + H2O. It functions in the pathway amino-acid biosynthesis; L-tryptophan biosynthesis; L-tryptophan from chorismate: step 4/5. In Mycolicibacterium vanbaalenii (strain DSM 7251 / JCM 13017 / BCRC 16820 / KCTC 9966 / NRRL B-24157 / PYR-1) (Mycobacterium vanbaalenii), this protein is Indole-3-glycerol phosphate synthase.